A 188-amino-acid polypeptide reads, in one-letter code: Protein GrpE (188 aa).

Residues 1-24 (MSDENKPGEAAELDAGVAPEAQPE) form a disordered region.

It belongs to the GrpE family. In terms of assembly, homodimer.

The protein resides in the cytoplasm. Functionally, participates actively in the response to hyperosmotic and heat shock by preventing the aggregation of stress-denatured proteins, in association with DnaK and GrpE. It is the nucleotide exchange factor for DnaK and may function as a thermosensor. Unfolded proteins bind initially to DnaJ; upon interaction with the DnaJ-bound protein, DnaK hydrolyzes its bound ATP, resulting in the formation of a stable complex. GrpE releases ADP from DnaK; ATP binding to DnaK triggers the release of the substrate protein, thus completing the reaction cycle. Several rounds of ATP-dependent interactions between DnaJ, DnaK and GrpE are required for fully efficient folding. The protein is Protein GrpE of Hyphomonas neptunium (strain ATCC 15444).